An 85-amino-acid chain; its full sequence is MSSLDKTMHFDFNQNKGKNVYDTLQDVYNALEEKGYSPINQIVGYLLSGDPAYIPRHNDARNLILKHERDEIIEELVKSYLGKNK.

It belongs to the UPF0297 family.

This Lactobacillus gasseri (strain ATCC 33323 / DSM 20243 / BCRC 14619 / CIP 102991 / JCM 1131 / KCTC 3163 / NCIMB 11718 / NCTC 13722 / AM63) protein is UPF0297 protein LGAS_0422.